The following is a 294-amino-acid chain: ATP synthase gamma chain (294 aa).

The protein belongs to the ATPase gamma chain family. In terms of assembly, F-type ATPases have 2 components, CF(1) - the catalytic core - and CF(0) - the membrane proton channel. CF(1) has five subunits: alpha(3), beta(3), gamma(1), delta(1), epsilon(1). CF(0) has three main subunits: a, b and c.

The protein resides in the cell inner membrane. Functionally, produces ATP from ADP in the presence of a proton gradient across the membrane. The gamma chain is believed to be important in regulating ATPase activity and the flow of protons through the CF(0) complex. In Campylobacter jejuni subsp. doylei (strain ATCC BAA-1458 / RM4099 / 269.97), this protein is ATP synthase gamma chain.